Consider the following 168-residue polypeptide: ATP synthase subunit b (168 aa).

The helical transmembrane segment at 9–29 (AIPFGTIAYTLFIFLILLVML) threads the bilayer.

This sequence belongs to the ATPase B chain family. In terms of assembly, F-type ATPases have 2 components, F(1) - the catalytic core - and F(0) - the membrane proton channel. F(1) has five subunits: alpha(3), beta(3), gamma(1), delta(1), epsilon(1). F(0) has three main subunits: a(1), b(2) and c(10-14). The alpha and beta chains form an alternating ring which encloses part of the gamma chain. F(1) is attached to F(0) by a central stalk formed by the gamma and epsilon chains, while a peripheral stalk is formed by the delta and b chains.

Its subcellular location is the cell membrane. Its function is as follows. F(1)F(0) ATP synthase produces ATP from ADP in the presence of a proton or sodium gradient. F-type ATPases consist of two structural domains, F(1) containing the extramembraneous catalytic core and F(0) containing the membrane proton channel, linked together by a central stalk and a peripheral stalk. During catalysis, ATP synthesis in the catalytic domain of F(1) is coupled via a rotary mechanism of the central stalk subunits to proton translocation. Component of the F(0) channel, it forms part of the peripheral stalk, linking F(1) to F(0). This chain is ATP synthase subunit b, found in Bacillus cereus (strain G9842).